A 65-amino-acid chain; its full sequence is DNA-directed RNA polymerase subunit Rpo10 (65 aa).

Zn(2+) contacts are provided by cysteine 7, cysteine 10, cysteine 44, and cysteine 45.

Belongs to the archaeal Rpo10/eukaryotic RPB10 RNA polymerase subunit family. Part of the RNA polymerase complex. Zn(2+) serves as cofactor.

The protein resides in the cytoplasm. It catalyses the reaction RNA(n) + a ribonucleoside 5'-triphosphate = RNA(n+1) + diphosphate. Functionally, DNA-dependent RNA polymerase (RNAP) catalyzes the transcription of DNA into RNA using the four ribonucleoside triphosphates as substrates. This is DNA-directed RNA polymerase subunit Rpo10 from Pyrococcus furiosus (strain ATCC 43587 / DSM 3638 / JCM 8422 / Vc1).